We begin with the raw amino-acid sequence, 436 residues long: Mitochondrial substrate carrier family protein Y (436 aa).

The interval 1-102 (MENNNKNINT…NINNNNINKK (102 aa)) is disordered. Residues 1–137 (MENNNKNINT…GGFLAGLSRN (137 aa)) are Mitochondrial intermembrane-facing. 2 Solcar repeats span residues 135–226 (SRNV…TLKY) and 236–334 (HDTL…LKKQ). The helical transmembrane segment at 138-158 (VTRIIGSFSSGMAEESAGYPL) threads the bilayer. Residues 159 to 194 (DLIKTRIQLSQSGVSGGGGTNTSIIKIFKDVIKTEG) lie on the Mitochondrial matrix side of the membrane. A helical transmembrane segment spans residues 195 to 215 (VIGLFKGLSSPLILSALVTAI). The Mitochondrial intermembrane segment spans residues 216–238 (QFGLFEDTLKYFRKHQYFKNHDT). The helical transmembrane segment at 239–259 (LSLLFSGSIAGFAQSFITCPV) threads the bilayer. The Mitochondrial matrix segment spans residues 260-313 (DLVKIQMQIQGIPSSQPNSNNNNNNNKAKGNSYFTKLIYREKGLLGFYQGLSPT). A helical transmembrane segment spans residues 314 to 334 (LFRDVPGLAIFFTTYETLKKQ). The Mitochondrial intermembrane segment spans residues 335-347 (FGQPELSTQSPTE). Residues 348–368 (FIKSFIPIVLSGGSAGVFYHG) traverse the membrane as a helical segment. One copy of the Solcar 3 repeat lies at 350–436 (KSFIPIVLSG…FLVYEMVINL (87 aa)). Topologically, residues 369–413 (LTHPFDIAKTLIQSDRSATKYKGTFDCLKQVYQNQGPKSLFKGFS) are mitochondrial matrix. A helical membrane pass occupies residues 414 to 434 (AVAIKSFQSNAVGFLVYEMVI). The Mitochondrial intermembrane segment spans residues 435 to 436 (NL).

Belongs to the mitochondrial carrier (TC 2.A.29) family.

The protein localises to the mitochondrion inner membrane. Its function is as follows. Mitochondrial solute carriers shuttle metabolites, nucleotides, and cofactors through the mitochondrial inner membrane. The polypeptide is Mitochondrial substrate carrier family protein Y (mcfY) (Dictyostelium discoideum (Social amoeba)).